A 312-amino-acid polypeptide reads, in one-letter code: Glyoxylate/hydroxypyruvate reductase A (312 aa).

The active site involves Arg227. Catalysis depends on His275, which acts as the Proton donor.

It belongs to the D-isomer specific 2-hydroxyacid dehydrogenase family. GhrA subfamily.

It is found in the cytoplasm. The enzyme catalyses glycolate + NADP(+) = glyoxylate + NADPH + H(+). The catalysed reaction is (R)-glycerate + NAD(+) = 3-hydroxypyruvate + NADH + H(+). It catalyses the reaction (R)-glycerate + NADP(+) = 3-hydroxypyruvate + NADPH + H(+). In terms of biological role, catalyzes the NADPH-dependent reduction of glyoxylate and hydroxypyruvate into glycolate and glycerate, respectively. The protein is Glyoxylate/hydroxypyruvate reductase A of Enterobacter sp. (strain 638).